A 332-amino-acid polypeptide reads, in one-letter code: Glycerol-3-phosphate dehydrogenase [NAD(P)+] (332 aa).

Residues Ser-11, Trp-12, Arg-32, Arg-33, and Lys-106 each contribute to the NADPH site. Lys-106 and Gly-136 together coordinate sn-glycerol 3-phosphate. Ala-140 contributes to the NADPH binding site. The sn-glycerol 3-phosphate site is built by Lys-191, Asp-244, Ser-254, Arg-255, and Asn-256. The Proton acceptor role is filled by Lys-191. An NADPH-binding site is contributed by Arg-255. 2 residues coordinate NADPH: Val-280 and Glu-282.

Belongs to the NAD-dependent glycerol-3-phosphate dehydrogenase family.

It is found in the cytoplasm. It catalyses the reaction sn-glycerol 3-phosphate + NAD(+) = dihydroxyacetone phosphate + NADH + H(+). It carries out the reaction sn-glycerol 3-phosphate + NADP(+) = dihydroxyacetone phosphate + NADPH + H(+). It participates in membrane lipid metabolism; glycerophospholipid metabolism. Functionally, catalyzes the reduction of the glycolytic intermediate dihydroxyacetone phosphate (DHAP) to sn-glycerol 3-phosphate (G3P), the key precursor for phospholipid synthesis. The sequence is that of Glycerol-3-phosphate dehydrogenase [NAD(P)+] from Corynebacterium jeikeium (strain K411).